The following is a 285-amino-acid chain: CBY1-interacting BAR domain-containing protein 1-B (285 aa).

The N-terminal 48 residues, 1 to 48 (MSQTPEARTRDNQTRQIQESVNNVEKHFGELCQIFAGYVRKTARLRDK), are a transit peptide targeting the mitochondrion. The segment at 11–221 (DNQTRQIQES…DIDEEEDLEV (211 aa)) is BAR-like. Residues 142–184 (RQIISQAETELQRATMDAARISQQLEETIDNFEKQKIKDIKKL) are a coiled coil. Polar residues predominate over residues 241–261 (NSRSGSTSRAPSVISQPPGNR). Residues 241-285 (NSRSGSTSRAPSVISQPPGNRQKNRMEDDEDGEDDNDENSTEDEN) form a disordered region. Acidic residues predominate over residues 267-285 (EDDEDGEDDNDENSTEDEN).

This sequence belongs to the CIBAR family.

It localises to the cytoplasm. Its subcellular location is the cytoskeleton. It is found in the microtubule organizing center. The protein resides in the centrosome. The protein localises to the centriole. It localises to the cell projection. Its subcellular location is the cilium. It is found in the nucleus. The protein resides in the mitochondrion inner membrane. The protein localises to the flagellum. Plays a critical role in regulating mitochondrial ultrastructure and function by maintaining the integrity of mitochondrial morphology, particularly the organization of cristae. Plays a crucial role in ciliogenesis. Plays a key role in the correct positioning of the annulus, a septin-based ring structure in the sperm flagellum, serving both as a physical barrier and a membrane diffusion barrier that separates the midpiece (MP) from the principal piece (PP). In Xenopus laevis (African clawed frog), this protein is CBY1-interacting BAR domain-containing protein 1-B.